Here is a 447-residue protein sequence, read N- to C-terminus: BAG family molecular chaperone regulator 5 (447 aa).

5 BAG domains span residues 9-86, 95-167, 182-260, 275-350, and 365-442; these read SISR…EQNA, QNIF…EDCM, SVAK…DLEE, SIIK…DLKE, and PHKA…DMKS.

In terms of assembly, binds to the ATPase domain of HSP/HSP70 chaperones. Binds PRKN. Interacts with HSPA8. Interacts with JPH2.

In terms of biological role, co-chaperone for HSP/HSP70 proteins. It functions as a nucleotide-exchange factor promoting the release of ADP from HSP70, thereby activating HSP70-mediated protein refolding. Has an essential role in maintaining proteostasis at junctional membrane complexes (JMC), where it may function as a scaffold between the HSPA8 chaperone and JMC proteins enabling correct, HSPA8-dependent JMC protein folding. Inhibits both auto-ubiquitination of PRKN and ubiquitination of target proteins by PRKN. The sequence is that of BAG family molecular chaperone regulator 5 (Bag5) from Mus musculus (Mouse).